Consider the following 353-residue polypeptide: Photosystem II protein D1 (353 aa).

Position 2 is an N-acetylthreonine (Thr-2). Thr-2 bears the Phosphothreonine mark. 3 helical membrane passes run 29 to 46 (YIGW…TATS), 118 to 133 (HFFI…EWEL), and 142 to 156 (WIAV…AATA). Position 118 (His-118) interacts with chlorophyll a. Position 126 (Tyr-126) interacts with pheophytin a. [CaMn4O5] cluster contacts are provided by Asp-170 and Glu-189. A helical transmembrane segment spans residues 197–218 (FHMLGVAGVFGGSLFSAMHGSL). A chlorophyll a-binding site is contributed by His-198. Residues His-215 and 264–265 (SF) contribute to the a quinone site. Residue His-215 coordinates Fe cation. His-272 contributes to the Fe cation binding site. Residues 274 to 288 (FLAAWPVIGIWFTAL) form a helical membrane-spanning segment. His-332, Glu-333, Asp-342, and Ala-344 together coordinate [CaMn4O5] cluster. The propeptide occupies 345–353 (AFEAPSINA).

Belongs to the reaction center PufL/M/PsbA/D family. PSII is composed of 1 copy each of membrane proteins PsbA, PsbB, PsbC, PsbD, PsbE, PsbF, PsbH, PsbI, PsbJ, PsbK, PsbL, PsbM, PsbT, PsbX, PsbY, PsbZ, Psb30/Ycf12, at least 3 peripheral proteins of the oxygen-evolving complex and a large number of cofactors. It forms dimeric complexes. The D1/D2 heterodimer binds P680, chlorophylls that are the primary electron donor of PSII, and subsequent electron acceptors. It shares a non-heme iron and each subunit binds pheophytin, quinone, additional chlorophylls, carotenoids and lipids. D1 provides most of the ligands for the Mn4-Ca-O5 cluster of the oxygen-evolving complex (OEC). There is also a Cl(-1) ion associated with D1 and D2, which is required for oxygen evolution. The PSII complex binds additional chlorophylls, carotenoids and specific lipids. is required as a cofactor. In terms of processing, tyr-161 forms a radical intermediate that is referred to as redox-active TyrZ, YZ or Y-Z. Post-translationally, C-terminally processed by CTPA; processing is essential to allow assembly of the oxygen-evolving complex and thus photosynthetic growth.

The protein resides in the plastid. The protein localises to the chloroplast thylakoid membrane. It catalyses the reaction 2 a plastoquinone + 4 hnu + 2 H2O = 2 a plastoquinol + O2. Its function is as follows. Photosystem II (PSII) is a light-driven water:plastoquinone oxidoreductase that uses light energy to abstract electrons from H(2)O, generating O(2) and a proton gradient subsequently used for ATP formation. It consists of a core antenna complex that captures photons, and an electron transfer chain that converts photonic excitation into a charge separation. The D1/D2 (PsbA/PsbD) reaction center heterodimer binds P680, the primary electron donor of PSII as well as several subsequent electron acceptors. The polypeptide is Photosystem II protein D1 (Chlamydomonas moewusii (Chlamydomonas eugametos)).